The sequence spans 401 residues: Phosphoglycerate kinase (401 aa).

Residues 24–26 (DFN), Arg40, 63–66 (HFGR), Arg122, and Arg155 contribute to the substrate site. Residues Lys206, Gly297, Glu328, and 357 to 360 (GGDS) contribute to the ATP site.

This sequence belongs to the phosphoglycerate kinase family. In terms of assembly, monomer.

The protein resides in the cytoplasm. It catalyses the reaction (2R)-3-phosphoglycerate + ATP = (2R)-3-phospho-glyceroyl phosphate + ADP. It participates in carbohydrate degradation; glycolysis; pyruvate from D-glyceraldehyde 3-phosphate: step 2/5. This chain is Phosphoglycerate kinase, found in Synechococcus sp. (strain CC9605).